A 225-amino-acid polypeptide reads, in one-letter code: 7-cyano-7-deazaguanine synthase (225 aa).

Residue 9–19 (YSGGLDSTTCL) coordinates ATP. Residues Cys-188, Cys-198, Cys-201, and Cys-204 each coordinate Zn(2+).

Belongs to the QueC family. Requires Zn(2+) as cofactor.

It carries out the reaction 7-carboxy-7-deazaguanine + NH4(+) + ATP = 7-cyano-7-deazaguanine + ADP + phosphate + H2O + H(+). Its pathway is purine metabolism; 7-cyano-7-deazaguanine biosynthesis. Catalyzes the ATP-dependent conversion of 7-carboxy-7-deazaguanine (CDG) to 7-cyano-7-deazaguanine (preQ(0)). This is 7-cyano-7-deazaguanine synthase from Geobacter sp. (strain M21).